Consider the following 168-residue polypeptide: Shikimate kinase (168 aa).

Glycine 10–threonine 15 lines the ATP pocket. Threonine 14 lines the Mg(2+) pocket. Residues aspartate 32, arginine 56, and glycine 77 each contribute to the substrate site. ATP is bound at residue arginine 115. Arginine 133 contributes to the substrate binding site.

The protein belongs to the shikimate kinase family. As to quaternary structure, monomer. It depends on Mg(2+) as a cofactor.

The protein localises to the cytoplasm. It catalyses the reaction shikimate + ATP = 3-phosphoshikimate + ADP + H(+). Its pathway is metabolic intermediate biosynthesis; chorismate biosynthesis; chorismate from D-erythrose 4-phosphate and phosphoenolpyruvate: step 5/7. In terms of biological role, catalyzes the specific phosphorylation of the 3-hydroxyl group of shikimic acid using ATP as a cosubstrate. The polypeptide is Shikimate kinase (Macrococcus caseolyticus (strain JCSC5402) (Macrococcoides caseolyticum)).